We begin with the raw amino-acid sequence, 175 residues long: Large ribosomal subunit protein uL10 (175 aa).

It belongs to the universal ribosomal protein uL10 family. As to quaternary structure, part of the ribosomal stalk of the 50S ribosomal subunit. The N-terminus interacts with L11 and the large rRNA to form the base of the stalk. The C-terminus forms an elongated spine to which L12 dimers bind in a sequential fashion forming a multimeric L10(L12)X complex.

Its function is as follows. Forms part of the ribosomal stalk, playing a central role in the interaction of the ribosome with GTP-bound translation factors. This is Large ribosomal subunit protein uL10 from Methylococcus capsulatus (strain ATCC 33009 / NCIMB 11132 / Bath).